An 868-amino-acid polypeptide reads, in one-letter code: Alanine--tRNA ligase (868 aa).

Zn(2+) contacts are provided by His-555, His-559, Cys-657, and His-661. The interval Ser-828–Glu-847 is disordered.

It belongs to the class-II aminoacyl-tRNA synthetase family. Zn(2+) is required as a cofactor.

It is found in the cytoplasm. It catalyses the reaction tRNA(Ala) + L-alanine + ATP = L-alanyl-tRNA(Ala) + AMP + diphosphate. In terms of biological role, catalyzes the attachment of alanine to tRNA(Ala) in a two-step reaction: alanine is first activated by ATP to form Ala-AMP and then transferred to the acceptor end of tRNA(Ala). Also edits incorrectly charged Ser-tRNA(Ala) and Gly-tRNA(Ala) via its editing domain. The sequence is that of Alanine--tRNA ligase from Pseudoalteromonas translucida (strain TAC 125).